A 507-amino-acid chain; its full sequence is Cytochrome P450 3A28 (507 aa).

Cys442 provides a ligand contact to heme.

It belongs to the cytochrome P450 family. Heme serves as cofactor.

It localises to the endoplasmic reticulum membrane. The protein localises to the microsome membrane. It catalyses the reaction an organic molecule + reduced [NADPH--hemoprotein reductase] + O2 = an alcohol + oxidized [NADPH--hemoprotein reductase] + H2O + H(+). Functionally, cytochromes P450 are a group of heme-thiolate monooxygenases. In liver microsomes, this enzyme is involved in an NADPH-dependent electron transport pathway. It oxidizes a variety of structurally unrelated compounds, including steroids, fatty acids, and xenobiotics. In Bos taurus (Bovine), this protein is Cytochrome P450 3A28 (CYP3A28).